The sequence spans 528 residues: GMP synthase [glutamine-hydrolyzing] (528 aa).

One can recognise a Glutamine amidotransferase type-1 domain in the interval 13 to 204 (AIVILDFGSQ…VYHICGCEPD (192 aa)). Cys90 (nucleophile) is an active-site residue. Active-site residues include His178 and Glu180. Residues 205–403 (WTTSAFIDEA…LGLPEEIVRR (199 aa)) enclose the GMPS ATP-PPase domain. ATP is bound at residue 232–238 (SGGVDSS).

In terms of assembly, homodimer.

It catalyses the reaction XMP + L-glutamine + ATP + H2O = GMP + L-glutamate + AMP + diphosphate + 2 H(+). Its pathway is purine metabolism; GMP biosynthesis; GMP from XMP (L-Gln route): step 1/1. Catalyzes the synthesis of GMP from XMP. The chain is GMP synthase [glutamine-hydrolyzing] from Parasynechococcus marenigrum (strain WH8102).